A 226-amino-acid chain; its full sequence is MGIEEKLPAGVLLTSVEKLVNWSRKSSVWGATFGLACCAIEMMAAGGPHYDMGRWGMEVFRASPRQADLMIVAGRVSQKMAPVLRQIYDQMAEPRWVLSMGVCASSGGMFNNYAIVQGVDHVVPVDMYLPGCPPRPEMLIDAVLKLREKIMHEPLGPNGRKMLEARKARGDVPVVPYGSMPSSYRSDKARRAEWTKAVREGREEQLRIENWMKAQPHLQQYEGLKK.

Positions 37, 38, 103, and 132 each coordinate [4Fe-4S] cluster.

Belongs to the complex I 20 kDa subunit family. In terms of assembly, NDH-1 is composed of 14 different subunits. Subunits NuoB, C, D, E, F, and G constitute the peripheral sector of the complex. It depends on [4Fe-4S] cluster as a cofactor.

Its subcellular location is the cell membrane. It catalyses the reaction a quinone + NADH + 5 H(+)(in) = a quinol + NAD(+) + 4 H(+)(out). NDH-1 shuttles electrons from NADH, via FMN and iron-sulfur (Fe-S) centers, to quinones in the respiratory chain. The immediate electron acceptor for the enzyme in this species is believed to be a menaquinone. Couples the redox reaction to proton translocation (for every two electrons transferred, four hydrogen ions are translocated across the cytoplasmic membrane), and thus conserves the redox energy in a proton gradient. This chain is NADH-quinone oxidoreductase subunit B 2, found in Salinispora arenicola (strain CNS-205).